The primary structure comprises 243 residues: Adapter protein MecA (243 aa).

Residues 119–140 (NQVEDGQGIAHNPTKDTNDLDP) are disordered.

Belongs to the MecA family. As to quaternary structure, homodimer.

Functionally, enables the recognition and targeting of unfolded and aggregated proteins to the ClpC protease or to other proteins involved in proteolysis. The protein is Adapter protein MecA of Lactiplantibacillus plantarum (strain ATCC BAA-793 / NCIMB 8826 / WCFS1) (Lactobacillus plantarum).